A 542-amino-acid polypeptide reads, in one-letter code: Monocarboxylate transporter 3 (542 aa).

The Cytoplasmic portion of the chain corresponds to 1–19; that stretch reads MGRADPEEGQLPAPVKPPD. The helical transmembrane segment at 20–40 threads the bilayer; it reads GGWGWIVLFGCFVITGFSYAF. The Extracellular segment spans residues 41-63; it reads PKAVSVYFKELMKDFHVGYSDTA. Residues 64-84 traverse the membrane as a helical segment; the sequence is WISSIMLAMLYGTGPVCSIMV. Over 85–93 the chain is Cytoplasmic; sequence NQFGCRPVM. Residues 94 to 114 form a helical membrane-spanning segment; it reads LIGGLLASSGMILASFTTNII. Over 115 to 119 the chain is Extracellular; it reads ELYLT. Residues 120 to 140 traverse the membrane as a helical segment; it reads AGVLTGLGMALNFQPSLIMLG. Residues 141–152 lie on the Cytoplasmic side of the membrane; the sequence is TYFDKRRPLANG. A helical membrane pass occupies residues 153–173; that stretch reads LAAAGSPVFLSSLSPLGQVLL. Residues 174 to 181 lie on the Extracellular side of the membrane; it reads EKFGWRGG. The helical transmembrane segment at 182-202 threads the bilayer; sequence FLIMGGLLLNCCTCGAVMRPL. Residues 203-265 are Cytoplasmic-facing; that stretch reads DAGMKRKTEK…LDFSIFSNRG (63 aa). The segment at 226–247 is disordered; it reads GGKSEEGISTTDGTKKTKKAKK. Residues 266-286 traverse the membrane as a helical segment; sequence FIIYTISKFILVLGLFVPPIL. At 287 to 301 the chain is on the extracellular side; that stretch reads LVNYAKDTGVPDTEA. Residues 302–322 traverse the membrane as a helical segment; the sequence is AFLLSIIGFIDIFARPACGMV. Residues 323–330 lie on the Cytoplasmic side of the membrane; it reads AGLKWVRP. Residues 331–351 form a helical membrane-spanning segment; sequence HVAYLFSFAMLFNGLTDICSA. Residues 352 to 357 lie on the Extracellular side of the membrane; that stretch reads RASNYT. The helical transmembrane segment at 358 to 378 threads the bilayer; the sequence is GLVIFCVFFGISYGMVGALQF. At 379–392 the chain is on the cytoplasmic side; it reads EVLMAIVGSQKFSS. Residues 393–413 traverse the membrane as a helical segment; that stretch reads AIGLVLLIEAFAVLIGPPSAG. Residues 414 to 423 are Extracellular-facing; it reads RLVDALKNYE. The chain crosses the membrane as a helical span at residues 424-444; that stretch reads VIFYLAGSEVVLSALFLAMAT. Topologically, residues 445-542 are cytoplasmic; the sequence is YCCLNRGKKT…ADQTVERDSF (98 aa). A disordered region spans residues 453 to 542; it reads KTPPPEKNPS…ADQTVERDSF (90 aa). 2 basolateral sorting signal regions span residues 465 to 510 and 511 to 532; these read GGSD…VEDE and QSGEGGRCPEADGEVSSRAGCN. The segment covering 468–478 has biased composition (acidic residues); it reads DTEEAESDVQE.

It belongs to the major facilitator superfamily. Monocarboxylate porter (TC 2.A.1.13) family. In terms of tissue distribution, retinal pigment epithelium.

The protein localises to the basolateral cell membrane. The catalysed reaction is (S)-lactate(in) + H(+)(in) = (S)-lactate(out) + H(+)(out). Its function is as follows. Probable retinal pigment epithelium (RPE)-specific proton-coupled L-lactate transporter. May facilitate transport of lactate and H(+) out of the retina and could therefore play a role in pH and ion homeostasis of the outer retina. This chain is Monocarboxylate transporter 3 (SLC16A8), found in Gallus gallus (Chicken).